A 681-amino-acid chain; its full sequence is Proton channel OTOP3 (681 aa).

The segment covering methionine 1–glycine 25 has biased composition (basic and acidic residues). The interval methionine 1 to lysine 26 is disordered. At methionine 1–arginine 112 the chain is on the cytoplasmic side. The chain crosses the membrane as a helical span at residues leucine 113–valine 133. At alanine 134–arginine 143 the chain is on the extracellular side. Residues aspartate 144–phenylalanine 166 traverse the membrane as a helical segment. Topologically, residues isoleucine 167 to alanine 182 are cytoplasmic. Residues methionine 183–isoleucine 204 traverse the membrane as a helical segment. Over glycine 205–leucine 216 the chain is Extracellular. A helical transmembrane segment spans residues methionine 217–cysteine 240. Over lysine 241 to histidine 248 the chain is Cytoplasmic. A helical membrane pass occupies residues serine 249–isoleucine 271. Over aspartate 272 to proline 317 the chain is Extracellular. A helical membrane pass occupies residues phenylalanine 318 to tryptophan 334. Residues lysine 335 to isoleucine 358 are Cytoplasmic-facing. The helical transmembrane segment at tyrosine 359–tyrosine 378 threads the bilayer. Residues glutamine 379 to tyrosine 392 lie on the Extracellular side of the membrane. The helical transmembrane segment at histidine 393 to isoleucine 415 threads the bilayer. The Cytoplasmic segment spans residues alanine 416–lysine 507. A helical transmembrane segment spans residues leucine 508 to isoleucine 529. The Extracellular segment spans residues alanine 530 to leucine 540. A helical transmembrane segment spans residues serine 541–isoleucine 563. Topologically, residues glutamate 564–glutamate 614 are cytoplasmic. A helical transmembrane segment spans residues methionine 615 to phenylalanine 632. Topologically, residues glycine 633 to isoleucine 651 are extracellular. The helical transmembrane segment at tryptophan 652–leucine 674 threads the bilayer. The Cytoplasmic portion of the chain corresponds to leucine 675–alanine 681.

It belongs to the otopetrin family. In terms of assembly, homodimer.

Its subcellular location is the cell membrane. The enzyme catalyses H(+)(in) = H(+)(out). With respect to regulation, pH regulates the proton channel activity from both sides of the plasma membrane. Low pH activates the channel from the extracellular side but inactivates the channel on the intracellular side. Zn(2+) and Ca(2+) can partially block the channel. Proton-selective channel gated by extracellular protons. This chain is Proton channel OTOP3 (otop3), found in Xenopus tropicalis (Western clawed frog).